A 61-amino-acid chain; its full sequence is Large ribosomal subunit protein bL28 (61 aa).

Residues 1–26 are disordered; that stretch reads MAKDFINGKRTQFGNKRSHALNSSRR. Positions 9–25 are enriched in polar residues; that stretch reads KRTQFGNKRSHALNSSR.

The protein belongs to the bacterial ribosomal protein bL28 family.

The protein is Large ribosomal subunit protein bL28 of Limosilactobacillus reuteri (strain DSM 20016) (Lactobacillus reuteri).